Consider the following 159-residue polypeptide: Large ribosomal subunit protein bL17 (159 aa).

Over residues 124 to 135 (EANRATRAAASK) the composition is skewed to low complexity. Positions 124–159 (EANRATRAAASKQAEEAKAEEAEATEAEAEETTEEK) are disordered. Residues 145 to 159 (AEATEAEAEETTEEK) are compositionally biased toward acidic residues.

Belongs to the bacterial ribosomal protein bL17 family. As to quaternary structure, part of the 50S ribosomal subunit. Contacts protein L32.

This Corynebacterium aurimucosum (strain ATCC 700975 / DSM 44827 / CIP 107346 / CN-1) (Corynebacterium nigricans) protein is Large ribosomal subunit protein bL17.